A 237-amino-acid chain; its full sequence is Large ribosomal subunit protein uL1 (237 aa).

It belongs to the universal ribosomal protein uL1 family. In terms of assembly, part of the 50S ribosomal subunit.

Binds directly to 23S rRNA. The L1 stalk is quite mobile in the ribosome, and is involved in E site tRNA release. In terms of biological role, protein L1 is also a translational repressor protein, it controls the translation of the L11 operon by binding to its mRNA. This Rickettsia typhi (strain ATCC VR-144 / Wilmington) protein is Large ribosomal subunit protein uL1.